Here is a 245-residue protein sequence, read N- to C-terminus: Photosystem II protein PSBS1 (245 aa).

A chloroplast-targeting transit peptide spans 1 to 25; it reads MAMTLSTKAFAQRGVSARKNTVRVY. Helical transmembrane passes span 72 to 92, 108 to 128, 185 to 205, and 217 to 237; these read LFVGRLAMVGFSASLIGEILT, GIEVDGLVIGLIAFNLIAAVL, LGFAFSLIGEAVTGKGALAQF, and EFGLVVFILFLLFAAINEGSG.

This sequence belongs to the ELIP/psbS family.

The protein resides in the plastid. It localises to the chloroplast thylakoid membrane. Functionally, required for non-photochemical quenching (NPQ), a mechanism that converts and dissipates the harmful excess absorbed light energy into heat and protect the photosynthetic apparatus from photo-oxidative damage. Seems involved in the activation of NPQ, possibly by promoting conformational changes required for activation of LHCSR3-dependent quenching in the antenna of photosystem II (PSII). This Chlamydomonas reinhardtii (Chlamydomonas smithii) protein is Photosystem II protein PSBS1.